A 92-amino-acid polypeptide reads, in one-letter code: RNA-binding protein Hfq (92 aa).

In terms of domain architecture, Sm spans 10–71 (DLFLNQLRKE…ISSIMPSKPI (62 aa)). A disordered region spans residues 73-92 (YMAQAQNNQQASQQSNNNQG). Residues 75-92 (AQAQNNQQASQQSNNNQG) show a composition bias toward low complexity.

Belongs to the Hfq family. In terms of assembly, homohexamer.

In terms of biological role, RNA chaperone that binds small regulatory RNA (sRNAs) and mRNAs to facilitate mRNA translational regulation in response to envelope stress, environmental stress and changes in metabolite concentrations. Also binds with high specificity to tRNAs. The protein is RNA-binding protein Hfq of Caldicellulosiruptor bescii (strain ATCC BAA-1888 / DSM 6725 / KCTC 15123 / Z-1320) (Anaerocellum thermophilum).